A 310-amino-acid chain; its full sequence is Putative S-adenosyl-L-methionine-dependent methyltransferase ML2640 (310 aa).

S-adenosyl-L-methionine contacts are provided by residues Asp-132 and 161 to 162; that span reads DL.

Belongs to the UPF0677 family.

Functionally, exhibits S-adenosyl-L-methionine-dependent methyltransferase activity. In Mycobacterium leprae (strain TN), this protein is Putative S-adenosyl-L-methionine-dependent methyltransferase ML2640.